Consider the following 196-residue polypeptide: Rac-like GTP-binding protein RAC13 (196 aa).

13 to 20 (GDGAVGKT) is a GTP binding site. Positions 35–43 (YVPTVFDNF) match the Effector region motif. GTP is bound by residues 60-64 (DTAGQ) and 118-121 (TKLD). Cys-193 carries the post-translational modification Cysteine methyl ester. Cys-193 carries the S-geranylgeranyl cysteine lipid modification. The propeptide at 194–196 (AFL) is removed in mature form.

It belongs to the small GTPase superfamily. Rho family.

The protein localises to the cytoplasm. It is found in the membrane. Functionally, could participate in a signal transduction pathway that controls cytoskeletal organization. In terms of biological role, inactive GDP-bound Rho GTPases reside in the cytosol, are found in a complex with Rho GDP-dissociation inhibitors (Rho GDIs), and are released from the GDI protein in order to translocate to membranes upon activation. This is Rac-like GTP-binding protein RAC13 (RAC13) from Gossypium hirsutum (Upland cotton).